We begin with the raw amino-acid sequence, 119 residues long: Nascent polypeptide-associated complex protein (119 aa).

An NAC-A/B domain is found at 5-73 (RMNSREMRRL…MREVPKEPEE (69 aa)).

The protein belongs to the NAC-alpha family. In terms of assembly, homodimer. Interacts with the ribosome. Binds ribosomal RNA.

Its function is as follows. Contacts the emerging nascent chain on the ribosome. This chain is Nascent polypeptide-associated complex protein, found in Thermoplasma acidophilum (strain ATCC 25905 / DSM 1728 / JCM 9062 / NBRC 15155 / AMRC-C165).